We begin with the raw amino-acid sequence, 106 residues long: Urease subunit beta (106 aa).

This sequence belongs to the urease beta subunit family. As to quaternary structure, heterotrimer of UreA (gamma), UreB (beta) and UreC (alpha) subunits. Three heterotrimers associate to form the active enzyme.

The protein resides in the cytoplasm. It carries out the reaction urea + 2 H2O + H(+) = hydrogencarbonate + 2 NH4(+). The protein operates within nitrogen metabolism; urea degradation; CO(2) and NH(3) from urea (urease route): step 1/1. The sequence is that of Urease subunit beta from Alkalilimnicola ehrlichii (strain ATCC BAA-1101 / DSM 17681 / MLHE-1).